A 430-amino-acid polypeptide reads, in one-letter code: Spermatogenic leucine zipper protein 1 (430 aa).

The segment at 1–25 is disordered; that stretch reads MASSAKSAEMPTISKTVNPTPDPHQ. The stretch at 62–102 forms a coiled coil; the sequence is EQQTAQKFNNLLKEIKDILKNMAGFEEKITEAKELFEETNI. At Ser107 the chain carries Phosphoserine. A helix-loop-helix motif region spans residues 166–177; the sequence is KINEMLSTNLPV. The basic motif stretch occupies residues 178–244; sequence SLAPEKEDNE…NVQEETMKIR (67 aa). Coiled coils occupy residues 214–269 and 316–351; these read LEEK…KLIK and SLQL…TLQE. The residue at position 258 (Ser258) is a Phosphoserine. The leucine-zipper stretch occupies residues 303-324; it reads LEEQVKKLSHDTYSLQLMAALL.

As to quaternary structure, interacts with PPP1CC isoform gamma-2. In terms of processing, phosphorylated by MAPK1/ERK2 and MAPK3/ERK1. As to expression, specifically and strongly expressed in the testis. Expressed in several tumor cell lines.

The protein localises to the cytoplasm. The protein resides in the nucleus. Its function is as follows. Transcription factor that binds to the DNA sequence 5'-CANNTG-3'(E box) and the G-box motif. May play an important role in the regulation of cell proliferation and differentiation during spermatogenesis. The polypeptide is Spermatogenic leucine zipper protein 1 (SPZ1) (Homo sapiens (Human)).